Here is an 83-residue protein sequence, read N- to C-terminus: EMBRYO SURROUNDING FACTOR 1.1 (83 aa).

The first 22 residues, 1 to 22 (MKSSHTSLICILMLSLVALHQC), serve as a signal peptide directing secretion. Disulfide bonds link Cys41–Cys56, Cys46–Cys75, Cys54–Cys71, and Cys57–Cys64.

This sequence belongs to the MEG family. In terms of tissue distribution, expressed exclusively in ovule embryo sacs and in early developing endosperms.

Its function is as follows. Maternally-contributed central cell peptide regulating suspensor development and correct auxin distribution in early developing embryos. In Arabidopsis thaliana (Mouse-ear cress), this protein is EMBRYO SURROUNDING FACTOR 1.1 (ESF1.1).